The sequence spans 170 residues: Adenine phosphoribosyltransferase (170 aa).

Belongs to the purine/pyrimidine phosphoribosyltransferase family. Homodimer.

Its subcellular location is the cytoplasm. It carries out the reaction AMP + diphosphate = 5-phospho-alpha-D-ribose 1-diphosphate + adenine. The protein operates within purine metabolism; AMP biosynthesis via salvage pathway; AMP from adenine: step 1/1. Its function is as follows. Catalyzes a salvage reaction resulting in the formation of AMP, that is energically less costly than de novo synthesis. In Alkaliphilus metalliredigens (strain QYMF), this protein is Adenine phosphoribosyltransferase.